We begin with the raw amino-acid sequence, 281 residues long: ATP synthase gamma chain (281 aa).

This sequence belongs to the ATPase gamma chain family. As to quaternary structure, F-type ATPases have 2 components, CF(1) - the catalytic core - and CF(0) - the membrane proton channel. CF(1) has five subunits: alpha(3), beta(3), gamma(1), delta(1), epsilon(1). CF(0) has three main subunits: a, b and c.

It localises to the cell inner membrane. Its function is as follows. Produces ATP from ADP in the presence of a proton gradient across the membrane. The gamma chain is believed to be important in regulating ATPase activity and the flow of protons through the CF(0) complex. This chain is ATP synthase gamma chain, found in Ehrlichia canis (strain Jake).